Here is a 587-residue protein sequence, read N- to C-terminus: Putative inactive receptor-like protein kinase At1g64210 (587 aa).

The signal sequence occupies residues 1–19 (MQIFLFFFSLILCFVLISS). Residues 20–232 (QTLEDDKKAL…KTPFGLSQLA (213 aa)) are Extracellular-facing. N-linked (GlcNAc...) asparagine glycosylation is found at asparagine 37 and asparagine 44. 5 LRR repeats span residues 89 to 112 (SLKFLSLRKNHFTGDFPSDFTNLK), 113 to 136 (SLTHLYLQHNHLSGPLLAIFSELK), 137 to 160 (NLKVLDLSNNGFNGSIPTSLSGLT), 161 to 183 (SLQVLNLANNSFSGEIPNLHLPK), and 184 to 205 (LSQINLSNNKLIGTIPKSLQRF). 4 N-linked (GlcNAc...) asparagine glycosylation sites follow: asparagine 149, asparagine 169, asparagine 188, and asparagine 214. The chain crosses the membrane as a helical span at residues 233 to 253 (FLLILSAACVLCVSGLSFIMI). Over 254–587 (TCFGKTRISG…IEDIRSVDAE (334 aa)) the chain is Cytoplasmic. The Protein kinase domain maps to 307-581 (SSSAEVLGKG…AQVLKLIEDI (275 aa)). At serine 309 the chain carries Phosphoserine. Residues 313-321 (LGKGAFGTT) and lysine 335 each bind ATP. The residue at position 386 (serine 386) is a Phosphoserine. Phosphothreonine is present on residues threonine 462, threonine 463, threonine 466, and threonine 477.

The protein resides in the cell membrane. This Arabidopsis thaliana (Mouse-ear cress) protein is Putative inactive receptor-like protein kinase At1g64210.